The following is a 400-amino-acid chain: Tryptophan synthase beta chain (400 aa).

An N6-(pyridoxal phosphate)lysine modification is found at Lys-95.

This sequence belongs to the TrpB family. Tetramer of two alpha and two beta chains. It depends on pyridoxal 5'-phosphate as a cofactor.

It catalyses the reaction (1S,2R)-1-C-(indol-3-yl)glycerol 3-phosphate + L-serine = D-glyceraldehyde 3-phosphate + L-tryptophan + H2O. The protein operates within amino-acid biosynthesis; L-tryptophan biosynthesis; L-tryptophan from chorismate: step 5/5. In terms of biological role, the beta subunit is responsible for the synthesis of L-tryptophan from indole and L-serine. This is Tryptophan synthase beta chain from Chlorobaculum tepidum (strain ATCC 49652 / DSM 12025 / NBRC 103806 / TLS) (Chlorobium tepidum).